The primary structure comprises 541 residues: Nuclear receptor subfamily 5 group A member 2 (541 aa).

Residues 1–10 (MSSNSDTGDL) are compositionally biased toward polar residues. A disordered region spans residues 1–35 (MSSNSDTGDLQESLKHGLTPIGAGLPDRHGSPIPA). A DNA-binding region (nuclear receptor) is located at residues 83–154 (EELCPVCGDK…KCLSVGMKLE (72 aa)). The Zn(2+) site is built by Cys86, Cys89, Cys103, Cys106, Cys122, Cys128, Cys138, and Cys141. NR C4-type zinc fingers lie at residues 86–106 (CPVC…CESC) and 122–146 (CIEN…FQKC). Residues 152–167 (KLEAVRADRMRGGRNK) form a C-terminal extension (CTE) region. An FTZ-F1 box motif is present at residues 168 to 187 (FGPMYKRDRALKQQKKALIR). Lys270 participates in a covalent cross-link: Glycyl lysine isopeptide (Lys-Gly) (interchain with G-Cter in SUMO1). The 240-residue stretch at 300–539 (SIPHLILELL…NLLIEMLHAK (240 aa)) folds into the NR LBD domain. A phospholipid derivative is bound by residues 421-424 (GATL), Tyr516, and Lys520. Residues 528–539 (YNNLLIEMLHAK) form an AF-2 region.

It belongs to the nuclear hormone receptor family. NR5 subfamily. Monomer; Binds DNA as a monomer. Interacts with nuclear receptor corepressors NR0B1 and NR0B2; repressing NR5A2 nuclear receptor activity. Interacts with nuclear receptor coactivators CTNNB1, PPARGC1A and NCOA2; interaction takes place following ligand-binding and promotes target gene activation. Interacts (when sumoylated) with GPS2; interaction with GPS2 onto hepatic acute phase protein promoters prevents N-Cor corepressor complex dissociation. Interacts with HNF1A. Interacts with GRIP1. In terms of processing, sumoylated by SUMO1 at Lys-270 during the hepatic acute phase response, leading to promote interaction with GPS2 and prevent N-Cor corepressor complex dissociation. As to expression, abundantly expressed in pancreas, less in liver, very low levels in heart and lung. Expressed in the Hep-G2 cell line. Isoform 1 and isoform 2 seem to be present in fetal and adult liver and Hep-G2 cells.

The protein resides in the nucleus. The protein localises to the chromosome. Its activity is regulated as follows. Activated by synthetic agonists RR-RJW100, SR-RJW100, endo sulfamide compound 6N and GSK8470. Functionally, orphan nuclear receptor that binds DNA as a monomer to the 5'-TCAAGGCCA-3' sequence and controls expression of target genes: regulates key biological processes, such as early embryonic development, cholesterol and bile acid synthesis pathways, as well as liver and pancreas morphogenesis. Ligand-binding causes conformational change which causes recruitment of coactivators, promoting target gene activation. The specific ligand is unknown, but specific phospholipids, such as phosphatidylethanolamine, phosphatidylserine, dilauroyl phosphatidylcholine and diundecanoyl phosphatidylcholine can act as ligand in vitro. Acts as a pioneer transcription factor, which unwraps target DNA from histones and elicits local opening of closed chromatin. Plays a central role during preimplantation stages of embryonic development. Plays a minor role in zygotic genome activation (ZGA) by regulating a small set of two-cell stage genes. Plays a major role in morula development (2-16 cells embryos) by acting as a master regulator at the 8-cell stage, controlling expression of lineage-specifying transcription factors and genes involved in mitosis, telomere maintenance and DNA repair. Zygotic NR5A2 binds to both closed and open chromatin with other transcription factors, often at SINE B1/Alu repeats DNA elements, promoting chromatin accessibility at nearby regulatory regions. Also involved in the epiblast stage of development and embryonic stem cell pluripotency, by promoting expression of POU5F1/OCT4. Regulates other processes later in development, such as formation of connective tissue in lower jaw and middle ear, neural stem cell differentiation, ovarian follicle development and Sertoli cell differentiation. Involved in exocrine pancreas development and acinar cell differentiation. Acts as an essential transcriptional regulator of lipid metabolism. Key regulator of cholesterol 7-alpha-hydroxylase gene (CYP7A) expression in liver. Also acts as a negative regulator of inflammation in different organs, such as, liver and pancreas. Protects against intestinal inflammation via its ability to regulate glucocorticoid production. Plays an anti-inflammatory role during the hepatic acute phase response by acting as a corepressor: inhibits the hepatic acute phase response by preventing dissociation of the N-Cor corepressor complex. Acts as a regulator of immunity by promoting lymphocyte T-cell development, proliferation and effector functions. Also involved in resolution of endoplasmic reticulum stress in the liver. Its function is as follows. In constrast to isoform 1 and isoform 2, does not induce cholesterol 7-alpha-hydroxylase gene (CYP7A) promoter activity. (Microbial infection) Plays a crucial role for hepatitis B virus gene transcription and DNA replication. Mechanistically, synergistically cooperates with HNF1A to up-regulate the activity of one of the critical cis-elements in the hepatitis B virus genome enhancer II (ENII). The chain is Nuclear receptor subfamily 5 group A member 2 from Homo sapiens (Human).